The primary structure comprises 545 residues: CTP synthase (545 aa).

Positions 1–266 (MTTRYIFVTG…DDLVVKRFGL (266 aa)) are amidoligase domain. S14 is a binding site for CTP. Position 14 (S14) interacts with UTP. Residues 15 to 20 (SLGKGI) and D72 contribute to the ATP site. D72 and E140 together coordinate Mg(2+). Residues 147–149 (DIE), 187–192 (KTKPTQ), and K223 each bind CTP. Residues 187–192 (KTKPTQ) and K223 contribute to the UTP site. 239–241 (KDV) serves as a coordination point for ATP. The Glutamine amidotransferase type-1 domain maps to 291-542 (VIGMVGKYIE…IAAASAHQKR (252 aa)). Residue G352 coordinates L-glutamine. C379 serves as the catalytic Nucleophile; for glutamine hydrolysis. L-glutamine-binding positions include 380 to 383 (LGMQ), E403, and R470. Catalysis depends on residues H515 and E517.

Belongs to the CTP synthase family. As to quaternary structure, homotetramer.

The catalysed reaction is UTP + L-glutamine + ATP + H2O = CTP + L-glutamate + ADP + phosphate + 2 H(+). It catalyses the reaction L-glutamine + H2O = L-glutamate + NH4(+). It carries out the reaction UTP + NH4(+) + ATP = CTP + ADP + phosphate + 2 H(+). Its pathway is pyrimidine metabolism; CTP biosynthesis via de novo pathway; CTP from UDP: step 2/2. Its activity is regulated as follows. Allosterically activated by GTP, when glutamine is the substrate; GTP has no effect on the reaction when ammonia is the substrate. The allosteric effector GTP functions by stabilizing the protein conformation that binds the tetrahedral intermediate(s) formed during glutamine hydrolysis. Inhibited by the product CTP, via allosteric rather than competitive inhibition. Catalyzes the ATP-dependent amination of UTP to CTP with either L-glutamine or ammonia as the source of nitrogen. Regulates intracellular CTP levels through interactions with the four ribonucleotide triphosphates. The chain is CTP synthase from Shewanella putrefaciens (strain CN-32 / ATCC BAA-453).